A 454-amino-acid chain; its full sequence is Tubulin gamma chain (454 aa).

Residue 142–148 coordinates GTP; sequence AGGTGSG.

This sequence belongs to the tubulin family.

It localises to the cytoplasm. It is found in the cytoskeleton. Its subcellular location is the microtubule organizing center. The protein localises to the spindle pole body. Functionally, tubulin is the major constituent of microtubules. The gamma chain is found at microtubule organizing centers (MTOC) such as the spindle pole or the centrosome, suggesting that it is involved in the minus-end nucleation of microtubule assembly. Interacts physically with beta-tubulin and is involved in microtubule function. The sequence is that of Tubulin gamma chain (mipA) from Emericella nidulans (strain FGSC A4 / ATCC 38163 / CBS 112.46 / NRRL 194 / M139) (Aspergillus nidulans).